The primary structure comprises 227 residues: 7-cyano-7-deazaguanine synthase (227 aa).

Phe8–Leu18 provides a ligand contact to ATP. 4 residues coordinate Zn(2+): Cys187, Cys196, Cys199, and Cys202.

It belongs to the QueC family. It depends on Zn(2+) as a cofactor.

It carries out the reaction 7-carboxy-7-deazaguanine + NH4(+) + ATP = 7-cyano-7-deazaguanine + ADP + phosphate + H2O + H(+). It functions in the pathway purine metabolism; 7-cyano-7-deazaguanine biosynthesis. In terms of biological role, catalyzes the ATP-dependent conversion of 7-carboxy-7-deazaguanine (CDG) to 7-cyano-7-deazaguanine (preQ(0)). In Aliivibrio fischeri (strain ATCC 700601 / ES114) (Vibrio fischeri), this protein is 7-cyano-7-deazaguanine synthase.